Here is a 353-residue protein sequence, read N- to C-terminus: Photosystem II protein D1 (353 aa).

Threonine 2 is modified (N-acetylthreonine). A Phosphothreonine modification is found at threonine 2. 3 helical membrane-spanning segments follow: residues 29–46 (YIGWFGVLMIPTLLTATS), 118–133 (HFLLGVACYMGREWEL), and 142–156 (WIAIAYSAPVAAATA). Histidine 118 provides a ligand contact to chlorophyll a. Tyrosine 126 is a binding site for pheophytin a. [CaMn4O5] cluster-binding residues include aspartate 170 and glutamate 189. Residues 197–218 (FHMLGVAGVFGGSLFSAMHGSL) form a helical membrane-spanning segment. Residue histidine 198 participates in chlorophyll a binding. A quinone-binding positions include histidine 215 and 264–265 (SF). Residue histidine 215 participates in Fe cation binding. A Fe cation-binding site is contributed by histidine 272. Residues 274 to 288 (FLAAWPVIGIWFTAL) traverse the membrane as a helical segment. [CaMn4O5] cluster-binding residues include histidine 332, glutamate 333, aspartate 342, and alanine 344. Positions 345-353 (TFEVSATNA) are excised as a propeptide.

It belongs to the reaction center PufL/M/PsbA/D family. PSII is composed of 1 copy each of membrane proteins PsbA, PsbB, PsbC, PsbD, PsbE, PsbF, PsbH, PsbI, PsbJ, PsbK, PsbL, PsbM, PsbT, PsbX, PsbY, PsbZ, Psb30/Ycf12, at least 3 peripheral proteins of the oxygen-evolving complex and a large number of cofactors. It forms dimeric complexes. The D1/D2 heterodimer binds P680, chlorophylls that are the primary electron donor of PSII, and subsequent electron acceptors. It shares a non-heme iron and each subunit binds pheophytin, quinone, additional chlorophylls, carotenoids and lipids. D1 provides most of the ligands for the Mn4-Ca-O5 cluster of the oxygen-evolving complex (OEC). There is also a Cl(-1) ion associated with D1 and D2, which is required for oxygen evolution. The PSII complex binds additional chlorophylls, carotenoids and specific lipids. serves as cofactor. Post-translationally, tyr-161 forms a radical intermediate that is referred to as redox-active TyrZ, YZ or Y-Z. In terms of processing, C-terminally processed by CTPA; processing is essential to allow assembly of the oxygen-evolving complex and thus photosynthetic growth.

The protein localises to the plastid membrane. The enzyme catalyses 2 a plastoquinone + 4 hnu + 2 H2O = 2 a plastoquinol + O2. Functionally, photosystem II (PSII) is a light-driven water:plastoquinone oxidoreductase that uses light energy to abstract electrons from H(2)O, generating O(2) and a proton gradient subsequently used for ATP formation. It consists of a core antenna complex that captures photons, and an electron transfer chain that converts photonic excitation into a charge separation. The D1/D2 (PsbA/PsbD) reaction center heterodimer binds P680, the primary electron donor of PSII as well as several subsequent electron acceptors. The polypeptide is Photosystem II protein D1 (Cuscuta gronovii (Common dodder)).